Reading from the N-terminus, the 315-residue chain is MFYMEFILSLIGSLLLIICVLVSVAFLTLLERKVLGYIQIRKGPNKVGLMGIPQPFCDAIKLFTKEQTYPLLSNYLSYYISPIFSLFLSLFVWMCMPFFVKLYSFNLGGLFFLCCTSLGVYTVMIAGWSSNSNYALLGGLRAVAQTISYEVSLALILLSFVFLIGSYNMMYFFYYQIYIWFLIILFPMALVWLTISLAETNRTPFDFAEGESELVSGFNVEYSSGGFALIFMAEYASILFMSMLFCVIFLGCDVFNLLFYVKLTFISFVFIWARGTLPRFRYDKLMYLAWKCFLSFSLNYLLFFIGFKILLFSFL.

8 helical membrane-spanning segments follow: residues 6-26 (FILS…SVAF), 80-100 (ISPI…PFFV), 107-127 (LGGL…MIAG), 153-173 (LALI…MYFF), 177-197 (IYIW…TISL), 229-249 (LIFM…CVIF), 253-273 (DVFN…FIWA), and 292-312 (CFLS…ILLF).

It belongs to the complex I subunit 1 family.

It localises to the mitochondrion inner membrane. It catalyses the reaction a ubiquinone + NADH + 5 H(+)(in) = a ubiquinol + NAD(+) + 4 H(+)(out). Core subunit of the mitochondrial membrane respiratory chain NADH dehydrogenase (Complex I) that is believed to belong to the minimal assembly required for catalysis. Complex I functions in the transfer of electrons from NADH to the respiratory chain. The immediate electron acceptor for the enzyme is believed to be ubiquinone. This Drosophila persimilis (Fruit fly) protein is NADH-ubiquinone oxidoreductase chain 1 (mt:ND1).